We begin with the raw amino-acid sequence, 460 residues long: Orexin receptor type 2 (460 aa).

Residues 1 to 54 (MSSTKLEDSLPRRNWSSASELNETQEPFLNPTDYDDEEFLRYLWREYLHPKEYE) lie on the Extracellular side of the membrane. Residues Asn-14 and Asn-22 are each glycosylated (N-linked (GlcNAc...) asparagine). A required for response to orexin-A region spans residues 33–49 (DYDDEEFLRYLWREYLH). A helical transmembrane segment spans residues 55 to 75 (WVLIAGYIIVFVVALIGNVLV). Residues 76–88 (CVAVWKNHHMRTV) are Cytoplasmic-facing. The chain crosses the membrane as a helical span at residues 89–110 (TNYFIVNLSLADVLVTITCLPA). The Extracellular segment spans residues 111 to 127 (TLVVDITETWFFGQSLC). An intrachain disulfide couples Cys-127 to Cys-210. A helical membrane pass occupies residues 128 to 150 (KVIPYLQTVSVSVSVLTLSCIAL). Residues 151-170 (DRWYAICHPLMFKSTAKRAR) lie on the Cytoplasmic side of the membrane. Residues 171-191 (NSIVVIWIVSCIIMIPQAIVM) traverse the membrane as a helical segment. The Extracellular portion of the chain corresponds to 192 to 222 (ERSSMLPGLANKTTLFTVCDERWGGEVYPKM). N-linked (GlcNAc...) asparagine glycosylation is present at Asn-202. The chain crosses the membrane as a helical span at residues 223–243 (YHICFFLVTYMAPLCLMVLAY). Residues 244-304 (LQIFRKLWCR…QIRARRKTAR (61 aa)) lie on the Cytoplasmic side of the membrane. A helical transmembrane segment spans residues 305 to 326 (MLMVVLLVFAICYLPISILNVL). The Extracellular segment spans residues 327–342 (KRVFGMFTHTEDRETV). Residues 343–366 (YAWFTFSHWLVYANSAANPIIYNF) traverse the membrane as a helical segment. Residues 367-460 (LSGKFREEFK…SSLLSTWLEV (94 aa)) are Cytoplasmic-facing.

Belongs to the G-protein coupled receptor 1 family. Expressed in the brain in the cerebral cortex, septal nuclei, hippocampus, medial thalamic groups, dorsal and median raphe nuclei, and many hypothalamic nuclei including the tuberomammillary nucleus, dorsomedial hypothalamus, paraventricular hypothalamic nucleus, and ventral premammillary nucleus. Not detected in the spleen, lung, liver, skeletal muscle, kidney and testis. Orexin receptor mRNA expression has also been reported in the adrenal gland, enteric nervous system, and pancreas.

It localises to the cell membrane. Its function is as follows. Nonselective, high-affinity receptor for both orexin-A and orexin-B neuropeptides. Triggers an increase in cytoplasmic Ca(2+) levels in response to orexin-A binding. In Rattus norvegicus (Rat), this protein is Orexin receptor type 2 (Hcrtr2).